Here is a 489-residue protein sequence, read N- to C-terminus: Equilibrative nucleobase transporter 1 (489 aa).

The chain crosses the membrane as a helical span at residues Leu-17–Phe-37. Asn-56 carries an N-linked (GlcNAc...) asparagine glycan. Transmembrane regions (helical) follow at residues Leu-72–Phe-92, Leu-102–Ser-122, Ala-123–Thr-143, and Ile-158–Tyr-180. Position 253 is a phosphoserine (Ser-253). At Thr-258 the chain carries Phosphothreonine. The next 6 helical transmembrane spans lie at Phe-277 to Thr-297, Asn-318 to Met-338, Ala-358 to Val-380, Ser-402 to Gly-422, Gly-426 to Ile-446, and Leu-455 to Val-475.

It belongs to the SLC43A transporter (TC 2.A.1.44) family.

It localises to the basolateral cell membrane. The catalysed reaction is adenine(out) = adenine(in). It carries out the reaction guanine(out) = guanine(in). It catalyses the reaction hypoxanthine(out) = hypoxanthine(in). Sodium-independent purine-selective nucleobase transporter which mediates the equilibrative transport of extracellular purine nucleobases such as adenine, guanine and hypoxanthine. May regulate fatty acid (FA) transport in adipocytes, acting as a positive regulator of FA efflux and as a negative regulator of FA uptake. The sequence is that of Equilibrative nucleobase transporter 1 (SLC43A3) from Bos taurus (Bovine).